We begin with the raw amino-acid sequence, 509 residues long: Probable cation transporter HKT2;3 (509 aa).

The Cytoplasmic portion of the chain corresponds to 1-32 (MPIRLHIFVNSARHAINSSAFICRFIAYHLSP). The next 2 helical transmembrane spans lie at 33–53 (LLIH…SLVV) and 96–116 (ILTL…GLVL). Residues 117–164 (ESSKQNKHDPENRRVSSVTVCKQSQLEEATPQTPSMNSIDIKKRCLKY) lie on the Cytoplasmic side of the membrane. Helical transmembrane passes span 165 to 185 (LVFV…LLVF) and 237 to 257 (GLLL…PVFL). The Cytoplasmic segment spans residues 258–296 (RLVIWALRGLRLAKAEEPDFMMNNSSAVGFSHLLPNLQT). 2 consecutive transmembrane segments (helical) span residues 297–317 (IFLA…FCCL) and 353–373 (CSLV…TPSL). Over 374–400 (TKLFSACQDHKRIGPESDDRTSKGKPF) the chain is Cytoplasmic. A run of 2 helical transmembrane segments spans residues 401–421 (LKMM…LVCI) and 474–494 (AYNF…LAML). Residues 495 to 509 (CGRLNSKDSTSARTR) are Cytoplasmic-facing.

Belongs to the TrkH potassium transport family. HKT (TC 2.A.38.3) subfamily.

It is found in the membrane. Functionally, probable cation transporter. May be involved in regulation of potassium-sodium homeostasis. This Oryza sativa subsp. japonica (Rice) protein is Probable cation transporter HKT2;3.